We begin with the raw amino-acid sequence, 398 residues long: G2/mitotic-specific cyclin-B2 (398 aa).

Disordered regions lie at residues M1–S26 and A53–A76. Phosphothreonine is present on T8. Positions T8–K23 are enriched in polar residues. Residues N55–N69 are compositionally biased toward low complexity. 2 positions are modified to phosphoserine: S77 and S92. At T94 the chain carries Phosphothreonine. S99, S392, and S398 each carry phosphoserine.

The protein belongs to the cyclin family. Cyclin AB subfamily. As to quaternary structure, interacts with the CDK1 protein kinase to form a serine/threonine kinase holoenzyme complex also known as maturation promoting factor (MPF). The cyclin subunit imparts substrate specificity to the complex.

Functionally, essential for the control of the cell cycle at the G2/M (mitosis) transition. The sequence is that of G2/mitotic-specific cyclin-B2 (CCNB2) from Bos taurus (Bovine).